The following is a 267-amino-acid chain: tRNA pseudouridine synthase A (267 aa).

Catalysis depends on aspartate 54, which acts as the Nucleophile. Position 114 (tyrosine 114) interacts with substrate.

Belongs to the tRNA pseudouridine synthase TruA family. In terms of assembly, homodimer.

It carries out the reaction uridine(38/39/40) in tRNA = pseudouridine(38/39/40) in tRNA. Formation of pseudouridine at positions 38, 39 and 40 in the anticodon stem and loop of transfer RNAs. The polypeptide is tRNA pseudouridine synthase A (Tropheryma whipplei (strain TW08/27) (Whipple's bacillus)).